A 479-amino-acid chain; its full sequence is Replication factor C large subunit (479 aa).

Position 43-50 (43-50 (GPPGVGKT)) interacts with ATP. The tract at residues 441–479 (EEKEESVEEVAEEKPEEEREEPRARKKAGKNLTLDSFFS) is disordered. Residues 452–463 (EEKPEEEREEPR) are compositionally biased toward basic and acidic residues.

It belongs to the activator 1 small subunits family. RfcL subfamily. As to quaternary structure, heteropentamer composed of four small subunits (RfcS) and one large subunit (RfcL). Both subunits interact with PCNA.

In terms of biological role, part of the RFC clamp loader complex which loads the PCNA sliding clamp onto DNA. The complex possesses DNA-dependent ATPase activity which is further stimulated by PCNA. The sequence is that of Replication factor C large subunit (rfcL) from Archaeoglobus fulgidus (strain ATCC 49558 / DSM 4304 / JCM 9628 / NBRC 100126 / VC-16).